Consider the following 313-residue polypeptide: Ornithine carbamoyltransferase (313 aa).

Residues 57-60 (STRT), Gln-84, Arg-108, and 135-138 (HPTQ) contribute to the carbamoyl phosphate site. Residues Asn-167, Asp-231, and 235-236 (SM) each bind L-ornithine. Residues 272–273 (CL) and Arg-300 contribute to the carbamoyl phosphate site.

It belongs to the aspartate/ornithine carbamoyltransferase superfamily. OTCase family.

Its subcellular location is the cytoplasm. The enzyme catalyses carbamoyl phosphate + L-ornithine = L-citrulline + phosphate + H(+). Its pathway is amino-acid biosynthesis; L-arginine biosynthesis; L-arginine from L-ornithine and carbamoyl phosphate: step 1/3. Its function is as follows. Reversibly catalyzes the transfer of the carbamoyl group from carbamoyl phosphate (CP) to the N(epsilon) atom of ornithine (ORN) to produce L-citrulline. This Caldanaerobacter subterraneus subsp. tengcongensis (strain DSM 15242 / JCM 11007 / NBRC 100824 / MB4) (Thermoanaerobacter tengcongensis) protein is Ornithine carbamoyltransferase.